The chain runs to 139 residues: MASVQAYAQWVTVHLINSMSSETLSIQNASLSWGKWYKDGDKDAEITSEDVQQKTAPPGGSVNVNSCGRSDASSGTTGGFDLYDGNTKIGRVHWDCPWGSKTNDFDVGERNKNYWVEIGTWNKYGGAIGTVDVEVGRKR.

Positions 1 to 5 are excised as a propeptide; it reads MASVQ. Residues 47–79 form a disordered region; sequence TSEDVQQKTAPPGGSVNVNSCGRSDASSGTTGG. The span at 62–75 shows a compositional bias: polar residues; sequence VNVNSCGRSDASSG.

This sequence belongs to the aegerolysin family.

This Aspergillus fumigatus (strain ATCC MYA-4609 / CBS 101355 / FGSC A1100 / Af293) (Neosartorya fumigata) protein is Asp-hemolysin.